The chain runs to 311 residues: Ornithine carbamoyltransferase (311 aa).

Carbamoyl phosphate is bound by residues 54–57 (STRT), Q81, R105, and 132–135 (HPCQ). Residues N164, D228, and 232–233 (SM) each bind L-ornithine. Residues 268 to 269 (CL) and R296 each bind carbamoyl phosphate.

This sequence belongs to the aspartate/ornithine carbamoyltransferase superfamily. OTCase family.

Its subcellular location is the cytoplasm. The enzyme catalyses carbamoyl phosphate + L-ornithine = L-citrulline + phosphate + H(+). It functions in the pathway amino-acid biosynthesis; L-arginine biosynthesis; L-arginine from L-ornithine and carbamoyl phosphate: step 1/3. Functionally, reversibly catalyzes the transfer of the carbamoyl group from carbamoyl phosphate (CP) to the N(epsilon) atom of ornithine (ORN) to produce L-citrulline. The sequence is that of Ornithine carbamoyltransferase from Renibacterium salmoninarum (strain ATCC 33209 / DSM 20767 / JCM 11484 / NBRC 15589 / NCIMB 2235).